Reading from the N-terminus, the 319-residue chain is MLDKHGRKINYLRVSVTDRCNLRCVYCMPPEGIVKKEHDNIMRYEEIFKVVKSASLLGVNKIRFTGGEPLILKDIDKLIYNTSKINSIKDIAMTTNAILLEDMVEELKKAGLKRVNISLDSLKEDRFKSITRGGDINKVFKSIEKSLSIGMKPIKINTVIMKGINDDEIDDFMNLTKKYPISVRFIELMPIGEGRKLYKDGYISSEEIISKHSDLIPVETEKSSTALLYKFKESKENIGFISPMSCKFCSGCNRVRLTSEGTLKPCLHSEKEVNLKNYVGNNQALLSKINETIYNKPLEHHMIEEKESKSKKMMYQIGG.

The 224-residue stretch at 4-227 (KHGRKINYLR…VETEKSSTAL (224 aa)) folds into the Radical SAM core domain. Arginine 13 contributes to the GTP binding site. [4Fe-4S] cluster-binding residues include cysteine 20 and cysteine 24. Tyrosine 26 is a binding site for S-adenosyl-L-methionine. Cysteine 27 contributes to the [4Fe-4S] cluster binding site. Arginine 63 lines the GTP pocket. Glycine 67 contacts S-adenosyl-L-methionine. Residue threonine 94 coordinates GTP. Serine 118 is an S-adenosyl-L-methionine binding site. A GTP-binding site is contributed by lysine 155. Methionine 189 provides a ligand contact to S-adenosyl-L-methionine. Cysteine 249 and cysteine 252 together coordinate [4Fe-4S] cluster. Residue 254–256 (RVR) participates in GTP binding. Cysteine 266 lines the [4Fe-4S] cluster pocket.

It belongs to the radical SAM superfamily. MoaA family. As to quaternary structure, monomer and homodimer. [4Fe-4S] cluster is required as a cofactor.

It catalyses the reaction GTP + AH2 + S-adenosyl-L-methionine = (8S)-3',8-cyclo-7,8-dihydroguanosine 5'-triphosphate + 5'-deoxyadenosine + L-methionine + A + H(+). It participates in cofactor biosynthesis; molybdopterin biosynthesis. Functionally, catalyzes the cyclization of GTP to (8S)-3',8-cyclo-7,8-dihydroguanosine 5'-triphosphate. In Clostridium botulinum (strain ATCC 19397 / Type A), this protein is GTP 3',8-cyclase.